The following is a 102-amino-acid chain: Monothiol glutaredoxin-S1 (102 aa).

A Glutaredoxin domain is found at 1–101; it reads MEKISNLLED…SLLRRAGAIW (101 aa). Residue C21 coordinates [2Fe-2S] cluster.

It belongs to the glutaredoxin family. CC-type subfamily.

It localises to the cytoplasm. May only reduce GSH-thiol disulfides, but not protein disulfides. The protein is Monothiol glutaredoxin-S1 (GRXS1) of Arabidopsis thaliana (Mouse-ear cress).